We begin with the raw amino-acid sequence, 381 residues long: Fe-S cluster assembly protein DRE2 (381 aa).

An N-terminal SAM-like domain region spans residues Ala8–Val165. The tract at residues Arg100–Glu134 is disordered. Positions Gly108–Gly118 are enriched in low complexity. Positions Ser119–Glu128 are enriched in gly residues. A linker region spans residues Pro166 to Met273. [2Fe-2S] cluster-binding residues include Cys283, Cys294, Cys297, and Cys299. Positions Cys283 to Cys299 are fe-S binding site A. [4Fe-4S] cluster is bound by residues Cys344, Cys347, Cys355, and Cys358. 2 consecutive short sequence motifs (cx2C motif) follow at residues Cys344–Cys347 and Cys355–Cys358. A fe-S binding site B region spans residues Cys344–Cys358.

The protein belongs to the anamorsin family. Monomer. Interacts with TAH18. Interacts with MIA40. [2Fe-2S] cluster serves as cofactor. [4Fe-4S] cluster is required as a cofactor.

Its subcellular location is the cytoplasm. It localises to the mitochondrion intermembrane space. Its function is as follows. Component of the cytosolic iron-sulfur (Fe-S) protein assembly (CIA) machinery required for the maturation of extramitochondrial Fe-S proteins. Part of an electron transfer chain functioning in an early step of cytosolic Fe-S biogenesis, facilitating the de novo assembly of a [4Fe-4S] cluster on the scaffold complex CFD1-NBP35. Electrons are transferred to DRE2 from NADPH via the FAD- and FMN-containing protein TAH18. TAH18-DRE2 are also required for the assembly of the diferric tyrosyl radical cofactor of ribonucleotide reductase (RNR), probably by providing electrons for reduction during radical cofactor maturation in the catalytic small subunit RNR2. The sequence is that of Fe-S cluster assembly protein DRE2 from Paracoccidioides brasiliensis (strain Pb18).